We begin with the raw amino-acid sequence, 138 residues long: Large-conductance mechanosensitive channel (138 aa).

Helical transmembrane passes span 19-39 (VGVIIGAAFGAIVSSLVGDVI), 40-60 (MPVIGAITGGLDFSNYFIGLS), and 81-101 (GSFLTVTLNFLIIAFVLFIVI).

The protein belongs to the MscL family. In terms of assembly, homopentamer.

Its subcellular location is the cell inner membrane. Its function is as follows. Channel that opens in response to stretch forces in the membrane lipid bilayer. May participate in the regulation of osmotic pressure changes within the cell. This Afipia carboxidovorans (strain ATCC 49405 / DSM 1227 / KCTC 32145 / OM5) (Oligotropha carboxidovorans) protein is Large-conductance mechanosensitive channel.